We begin with the raw amino-acid sequence, 412 residues long: Acetate kinase (412 aa).

N10 contributes to the Mg(2+) binding site. ATP is bound at residue K17. Residues 40 to 61 (ETSRLAHTPSAGGGAEPRERTG) are disordered. R95 is a binding site for substrate. Catalysis depends on D152, which acts as the Proton donor/acceptor. ATP contacts are provided by residues 212-216 (HLGNG), 286-288 (DMR), and 334-338 (GVGEN). E388 contributes to the Mg(2+) binding site.

This sequence belongs to the acetokinase family. As to quaternary structure, homodimer. It depends on Mg(2+) as a cofactor. Mn(2+) is required as a cofactor.

It localises to the cytoplasm. The catalysed reaction is acetate + ATP = acetyl phosphate + ADP. It functions in the pathway metabolic intermediate biosynthesis; acetyl-CoA biosynthesis; acetyl-CoA from acetate: step 1/2. Catalyzes the formation of acetyl phosphate from acetate and ATP. Can also catalyze the reverse reaction. In Streptomyces griseus subsp. griseus (strain JCM 4626 / CBS 651.72 / NBRC 13350 / KCC S-0626 / ISP 5235), this protein is Acetate kinase.